Reading from the N-terminus, the 1475-residue chain is Gag-Pol polyprotein (1475 aa).

Residues 130-147 (TQNTQNKKQTSNQTNTQS) show a composition bias toward low complexity. Positions 130–159 (TQNTQNKKQTSNQTNTQSLPAITTQDGTPR) are disordered. 2 CCHC-type zinc fingers span residues 403 to 420 (RRCY…NCKQ) and 421 to 438 (QKCY…NCRS). The Peptidase A2 domain occupies 492 to 565 (VKGLVDTGAD…TPVNLFGRSL (74 aa)). Asp-497 is an active-site residue. Residues 619–806 (EGKISEAAWD…ERVKWIGFEL (188 aa)) enclose the Reverse transcriptase domain. In terms of domain architecture, RNase H type-1 spans 999-1119 (RENLTTYYTD…ADEGVKKALE (121 aa)). An Integrase-type zinc finger spans residues 1199–1240 (ENIPSATEDHERWHTSPDILVRQFHLPKRIAKEIVARCQECK). The Zn(2+) site is built by His-1208, His-1212, Cys-1236, and Cys-1239. Residues 1248-1400 (RGTNPRGRFL…TPYEIYLESE (153 aa)) form the Integrase catalytic domain. Positions 1419–1465 (KWCYVRNRRKEWKGPYKVLWDGDGAAVIEEEGKTALYPHRHMRFIPP) form a DNA-binding region, integrase-type.

Interacts with host light chain cytoplasmic dynein DYNLL1; this interaction is critical for intracellular microtubule-dependent viral genome transport. In terms of processing, specific enzymatic cleavages by the viral protease yield mature proteins. The protease is released by autocatalytic cleavage. The polyprotein is cleaved during and after budding, this process is termed maturation.

Its subcellular location is the virion. The catalysed reaction is DNA(n) + a 2'-deoxyribonucleoside 5'-triphosphate = DNA(n+1) + diphosphate. It catalyses the reaction Endohydrolysis of RNA in RNA/DNA hybrids. Three different cleavage modes: 1. sequence-specific internal cleavage of RNA. Human immunodeficiency virus type 1 and Moloney murine leukemia virus enzymes prefer to cleave the RNA strand one nucleotide away from the RNA-DNA junction. 2. RNA 5'-end directed cleavage 13-19 nucleotides from the RNA end. 3. DNA 3'-end directed cleavage 15-20 nucleotides away from the primer terminus.. It carries out the reaction 3'-end directed exonucleolytic cleavage of viral RNA-DNA hybrid.. Matrix protein p16 forms the outer shell of the core of the virus, lining the inner surface of the viral membrane. In terms of biological role, capsid protein p26 forms the conical core of the virus that encapsulates the genomic RNA-nucleocapsid complex. Interaction between incoming particle-associated Gag proteins and host dynein allows intracellular microtubule-dependent virus transport toward the perinuclear region, prior to nucleus translocation and integration into host genome. Functionally, the aspartyl protease mediates proteolytic cleavages of Gag and Gag-Pol polyproteins during or shortly after the release of the virion from the plasma membrane. Cleavages take place as an ordered, step-wise cascade to yield mature proteins. This process is called maturation. Displays maximal activity during the budding process just prior to particle release from the cell. Its function is as follows. Reverse transcriptase/ribonuclease H (RT) is a multifunctional enzyme that converts the viral RNA genome into dsDNA in the cytoplasm, shortly after virus entry into the cell. This enzyme displays a DNA polymerase activity that can copy either DNA or RNA templates, and a ribonuclease H (RNase H) activity that cleaves the RNA strand of RNA-DNA heteroduplexes in a partially processive 3' to 5' endonucleasic mode. Conversion of viral genomic RNA into dsDNA requires many steps. A tRNA binds to the primer-binding site (PBS) situated at the 5'-end of the viral RNA. RT uses the 3' end of the tRNA primer to perform a short round of RNA-dependent minus-strand DNA synthesis. The reading proceeds through the U5 region and ends after the repeated (R) region which is present at both ends of viral RNA. The portion of the RNA-DNA heteroduplex is digested by the RNase H, resulting in a ssDNA product attached to the tRNA primer. This ssDNA/tRNA hybridizes with the identical R region situated at the 3' end of viral RNA. This template exchange, known as minus-strand DNA strong stop transfer, can be either intra- or intermolecular. RT uses the 3' end of this newly synthesized short ssDNA to perform the RNA-dependent minus-strand DNA synthesis of the whole template. RNase H digests the RNA template except for a polypurine tract (PPT) situated at the 5'-end of the genome. It is not clear if both polymerase and RNase H activities are simultaneous. RNase H probably can proceed both in a polymerase-dependent (RNA cut into small fragments by the same RT performing DNA synthesis) and a polymerase-independent mode (cleavage of remaining RNA fragments by free RTs). Secondly, RT performs DNA-directed plus-strand DNA synthesis using the PPT that has not been removed by RNase H as primer. PPT and tRNA primers are then removed by RNase H. The 3' and 5' ssDNA PBS regions hybridize to form a circular dsDNA intermediate. Strand displacement synthesis by RT to the PBS and PPT ends produces a blunt ended, linear dsDNA copy of the viral genome that includes long terminal repeats (LTRs) at both ends. Integrase catalyzes viral DNA integration into the host chromosome, by performing a series of DNA cutting and joining reactions. This enzyme activity takes place after virion entry into a cell and reverse transcription of the RNA genome in dsDNA. The chain is Gag-Pol polyprotein (gag-pol) from Bovine immunodeficiency virus (strain R29) (BIV).